The following is a 227-amino-acid chain: Probable N-acetyltransferase family 8 member 5 (227 aa).

3 helical membrane passes run isoleucine 29–methionine 49, isoleucine 53–leucine 73, and isoleucine 201–serine 221. Residues phenylalanine 69–isoleucine 213 form the N-acetyltransferase domain.

It belongs to the camello family.

The protein localises to the membrane. Functionally, may play a role in regulation of gastrulation. The chain is Probable N-acetyltransferase family 8 member 5 from Mus musculus (Mouse).